The primary structure comprises 142 residues: Putative pre-16S rRNA nuclease (142 aa).

It belongs to the YqgF nuclease family.

It is found in the cytoplasm. Could be a nuclease involved in processing of the 5'-end of pre-16S rRNA. This chain is Putative pre-16S rRNA nuclease, found in Staphylococcus aureus (strain JH1).